Reading from the N-terminus, the 237-residue chain is Lectin alpha chain (237 aa).

Mn(2+) is bound by residues E8 and D10. Ca(2+) is bound by residues D10, Y12, N14, and D19. The a carbohydrate site is built by Y12 and N14. Residues D19 and H24 each coordinate Mn(2+). 99–100 (LY) is an a carbohydrate binding site. A Ca(2+)-binding site is contributed by D208. R228 serves as a coordination point for a carbohydrate.

It belongs to the leguminous lectin family. Homodimer and homotetramer. Oligomerization is pH-dependent with homotetramers forming at pH 4 and above.

D-mannose/D-glucose-binding lectin. Has anti-inflammatory activity in animal models when applied intravenously. Has antinociceptive activity in mice when applied intravenously. This is Lectin alpha chain from Canavalia boliviana.